We begin with the raw amino-acid sequence, 609 residues long: MAGTLDLDKGCTVEELLRGCIEAFDDSGKVRDPQLVRMFLMMHPWYIPSSQLAAKLLHIYQQSRKDNSNSLQVKTCHLVRYWISAFPAEFDLNPELAEQIKELKALLDQEGNRRHSSLIDIDSVPTYKWKRQVTQRNPVGQKKRKMSLLFDHLEPMELAEHLTYLEYRSFCKILFQDYHSFVTHGCTVDNPVLERFISLFNSVSQWVQLMILSKPTAPQRALVITHFVHVAEKLLQLQNFNTLMAVVGGLSHSSISRLKETHSHVSPETIKLWEGLTELVTATGNYGNYRRRLAACVGFRFPILGVHLKDLVALQLALPDWLDPARTRLNGAKMKQLFSILEELAMVTSLRPPVQANPDLLSLLTVSLDQYQTEDELYQLSLQREPRSKSSPTSPTSCTPPPRPPVLEEWTSAAKPKLDQALVVEHIEKMVESVFRNFDVDGDGHISQEEFQIIRGNFPYLSAFGDLDQNQDGCISREEMVSYFLRSSSVLGGRMGFVHNFQESNSLRPVACRHCKALILGIYKQGLKCRACGVNCHKQCKDRLSVECRRRAQSVSLEGSAPSPSPMHSHHHRAFSFSLPRPGRRGSRPPEIREEEVQTVEDGVFDIHL.

Ala2 carries N-myristoyl glycine lipidation. An N-terminal Ras-GEF domain is found at 4-126 (TLDLDKGCTV…SLIDIDSVPT (123 aa)). The S-palmitoyl cysteine moiety is linked to residue Leu7. Ser116, Ser117, and Ser147 each carry phosphoserine. The Ras-GEF domain occupies 154–387 (EPMELAEHLT…YQLSLQREPR (234 aa)). The tract at residues 382–406 (LQREPRSKSSPTSPTSCTPPPRPPV) is disordered. 2 EF-hand domains span residues 426–461 (HIEKMVESVFRNFDVDGDGHISQEEFQIIRGNFPYL) and 455–490 (RGNFPYLSAFGDLDQNQDGCISREEMVSYFLRSSSV). 10 residues coordinate Ca(2+): Asp439, Asp441, Asp443, His445, Glu450, Asp468, Asn470, Asp472, Cys474, and Glu479. Residues 498–548 (VHNFQESNSLRPVACRHCKALILGIYKQGLKCRACGVNCHKQCKDRLSVEC) form a Phorbol-ester/DAG-type zinc finger. Ser554 and Ser576 each carry phosphoserine. Positions 557–592 (LEGSAPSPSPMHSHHHRAFSFSLPRPGRRGSRPPEI) are disordered.

This sequence belongs to the RASGRP family. Forms a signaling complex with RAP1 and BRAF. Interacts with RAP1. Interacts with F-actin. Isoform 2 is palmitoylated and myristoylated. Detected in platelets, neutrophils and T lymphocytes (at protein level). Expressed in brain where it is enriched in the striatum. Also expressed in the hematopoietic system. Detected in heart, brain, lung, placenta, liver, skeletal muscle and kidney.

It localises to the cytoplasm. The protein resides in the cytosol. Its subcellular location is the cell membrane. The protein localises to the synapse. It is found in the synaptosome. It localises to the cell projection. The protein resides in the ruffle membrane. Isoform 1 and isoform 2 are differently regulated by calcium and DAG. Functionally, functions as a calcium- and DAG-regulated nucleotide exchange factor specifically activating Rap through the exchange of bound GDP for GTP. May also activate other GTPases such as RRAS, RRAS2, NRAS, KRAS but not HRAS. Functions in aggregation of platelets and adhesion of T-lymphocytes and neutrophils probably through inside-out integrin activation. May function in the muscarinic acetylcholine receptor M1/CHRM1 signaling pathway. The polypeptide is RAS guanyl-releasing protein 2 (RASGRP2) (Homo sapiens (Human)).